Reading from the N-terminus, the 166-residue chain is uncharacterized protein (166 aa).

This is an uncharacterized protein from Saccharomyces cerevisiae (strain ATCC 204508 / S288c) (Baker's yeast).